Reading from the N-terminus, the 1107-residue chain is Phospholipid-transporting ATPase 2 (1107 aa).

The Cytoplasmic segment spans residues 1 to 33; sequence MKRFVYINDDEASKELCCDNRISNRKYTLWNFL. A helical membrane pass occupies residues 34 to 55; sequence PKNLWEQFSRFMNQYFLLIACL. The Extracellular portion of the chain corresponds to 56–60; it reads QLWSL. A helical membrane pass occupies residues 61-83; it reads ITPVNPASTWGPLIFIFAVSASK. Topologically, residues 84–268 are cytoplasmic; sequence EAWDDYHRYL…TAMDAMIDKL (185 aa). A helical transmembrane segment spans residues 269-290; that stretch reads TGAIFVFQIVVVLVLGIAGNVW. Topologically, residues 291–315 are extracellular; that stretch reads KDTEARKQWYVQYPEEAPWYELLVI. Residues 316–333 traverse the membrane as a helical segment; the sequence is PLRFELLCSIMIPISIKV. At 334-807 the chain is on the cytoplasmic side; it reads SLDLVKGLYA…HGRYSYNRTA (474 aa). D381 serves as the catalytic 4-aspartylphosphate intermediate. Residues D752 and D756 each coordinate Mg(2+). Residues 808–827 form a helical membrane-spanning segment; the sequence is FLSQYSFYKSLLICFIQIFF. Residues 828–841 lie on the Extracellular side of the membrane; sequence SFISGVSGTSLFNS. A helical transmembrane segment spans residues 842-860; the sequence is VSLMAYNVFYTSVPVLVSV. The Cytoplasmic portion of the chain corresponds to 861–890; the sequence is IDKDLSEASVMQHPQILFYCQAGRLLNPST. Residues 891–912 form a helical membrane-spanning segment; sequence FAGWFGRSLFHAIIVFVITIHA. The Extracellular portion of the chain corresponds to 913 to 919; it reads YAYEKSE. The helical transmembrane segment at 920-942 threads the bilayer; the sequence is MEELGMVALSGCIWLQAFVVAQE. Residues 943–948 are Cytoplasmic-facing; that stretch reads TNSFTV. The chain crosses the membrane as a helical span at residues 949-969; sequence LQHLSIWGNLVGFYAINFLFS. Topologically, residues 970-982 are extracellular; the sequence is AIPSSGMYTIMFR. Residues 983-1007 traverse the membrane as a helical segment; sequence LCSQPSYWITMFLIVGAGMGPIFAL. Over 1008 to 1107 the chain is Cytoplasmic; it reads KYFRYTYRPS…SGYTRNCKDN (100 aa). The segment at 1048 to 1075 is disordered; that stretch reads DLSPISITQPKNRSPVYEPLLSDSPNAT. Position 1050 is a phosphoserine (S1050).

This sequence belongs to the cation transport ATPase (P-type) (TC 3.A.3) family. Type IV subfamily. In terms of assembly, interacts with ALIS1, ALIS3 and ALIS5 in a heterologous system.

Its subcellular location is the endoplasmic reticulum membrane. It is found in the prevacuolar compartment membrane. The catalysed reaction is ATP + H2O + phospholipidSide 1 = ADP + phosphate + phospholipidSide 2.. Functionally, involved in transport of phospholipids. Contributes to transmembrane flipping of lipids. Requires an interaction with a protein of the ALIS family for activity. Specific for phosphatidylserine and has no activity with lysolipid, phosphatidylcholine or phosphatidylethanolamine. This is Phospholipid-transporting ATPase 2 from Arabidopsis thaliana (Mouse-ear cress).